A 160-amino-acid polypeptide reads, in one-letter code: 2-C-methyl-D-erythritol 2,4-cyclodiphosphate synthase (160 aa).

Positions 9 and 11 each coordinate a divalent metal cation. 4-CDP-2-C-methyl-D-erythritol 2-phosphate is bound by residues 9-11 (DVH) and 35-36 (HS). A divalent metal cation is bound at residue His-43. 4-CDP-2-C-methyl-D-erythritol 2-phosphate contacts are provided by residues 57–59 (DIG), 62–66 (FPDTD), 101–107 (AEAPKMA), 133–136 (TTSE), Phe-140, and Arg-143.

It belongs to the IspF family. In terms of assembly, homotrimer. A divalent metal cation serves as cofactor.

The catalysed reaction is 4-CDP-2-C-methyl-D-erythritol 2-phosphate = 2-C-methyl-D-erythritol 2,4-cyclic diphosphate + CMP. It participates in isoprenoid biosynthesis; isopentenyl diphosphate biosynthesis via DXP pathway; isopentenyl diphosphate from 1-deoxy-D-xylulose 5-phosphate: step 4/6. In terms of biological role, involved in the biosynthesis of isopentenyl diphosphate (IPP) and dimethylallyl diphosphate (DMAPP), two major building blocks of isoprenoid compounds. Catalyzes the conversion of 4-diphosphocytidyl-2-C-methyl-D-erythritol 2-phosphate (CDP-ME2P) to 2-C-methyl-D-erythritol 2,4-cyclodiphosphate (ME-CPP) with a corresponding release of cytidine 5-monophosphate (CMP). The sequence is that of 2-C-methyl-D-erythritol 2,4-cyclodiphosphate synthase from Methylobacillus flagellatus (strain ATCC 51484 / DSM 6875 / VKM B-1610 / KT).